Here is a 94-residue protein sequence, read N- to C-terminus: Translation initiation factor IF-1 (94 aa).

Residues 1–72 (MAKEELIQFE…EKGRLIFRHK (72 aa)) form the S1-like domain. Residues 71-94 (HKDERPGGTGAPRSGPPRGQFRRR) are disordered.

Belongs to the IF-1 family. As to quaternary structure, component of the 30S ribosomal translation pre-initiation complex which assembles on the 30S ribosome in the order IF-2 and IF-3, IF-1 and N-formylmethionyl-tRNA(fMet); mRNA recruitment can occur at any time during PIC assembly.

It is found in the cytoplasm. In terms of biological role, one of the essential components for the initiation of protein synthesis. Stabilizes the binding of IF-2 and IF-3 on the 30S subunit to which N-formylmethionyl-tRNA(fMet) subsequently binds. Helps modulate mRNA selection, yielding the 30S pre-initiation complex (PIC). Upon addition of the 50S ribosomal subunit IF-1, IF-2 and IF-3 are released leaving the mature 70S translation initiation complex. The chain is Translation initiation factor IF-1 from Rhodopseudomonas palustris (strain HaA2).